We begin with the raw amino-acid sequence, 158 residues long: Tryptophan-rich sensory protein (158 aa).

The next 5 membrane-spanning stretches (helical) occupy residues 5–25 (WALFLTFLAACGAPATTGALL), 44–65 (WVFPLAWTSLYFLMSLAAMRVA), 73–93 (ALAFYAAQLAFNTLWTPVFFG), 97–119 (MATALAVVMVMWLFVAATMWAFF), and 124–144 (WAGVLFVPYLIWATAATGLNF).

The protein belongs to the TspO/BZRP family. In terms of assembly, homodimer.

Its subcellular location is the membrane. It is found in the cell inner membrane. Functionally, may play a role in the transmembrane transport of tetrapyrroles and similar compounds, and thereby contribute to the regulation of tetrapyrrole biosynthesis. Binds tetrapyrroles and promotes the photooxidative degradation of protoporphyrin IX. Binds protoporphyrin IX, hemin, and coproporphyrin III, but does not bind delta-aminolevulinic acid. Can bind bilirubin, curcumin, gossypol, retinoic acid, cholesterol and the benzodiazepine receptor agonist PK-11195 (in vitro). Plays a role in the response to low oxygen levels and in the regulation of the biosynthesis of photosynthetic pigments. The protein is Tryptophan-rich sensory protein of Cereibacter sphaeroides (Rhodobacter sphaeroides).